The following is a 245-amino-acid chain: Orotidine 5'-phosphate decarboxylase (245 aa).

Residues aspartate 22, lysine 44, 71–80 (DLKFHDIPNT), threonine 131, arginine 192, glutamine 201, glycine 221, and arginine 222 each bind substrate. Lysine 73 functions as the Proton donor in the catalytic mechanism.

This sequence belongs to the OMP decarboxylase family. Type 1 subfamily. In terms of assembly, homodimer.

It catalyses the reaction orotidine 5'-phosphate + H(+) = UMP + CO2. It functions in the pathway pyrimidine metabolism; UMP biosynthesis via de novo pathway; UMP from orotate: step 2/2. In terms of biological role, catalyzes the decarboxylation of orotidine 5'-monophosphate (OMP) to uridine 5'-monophosphate (UMP). This is Orotidine 5'-phosphate decarboxylase from Escherichia fergusonii (strain ATCC 35469 / DSM 13698 / CCUG 18766 / IAM 14443 / JCM 21226 / LMG 7866 / NBRC 102419 / NCTC 12128 / CDC 0568-73).